We begin with the raw amino-acid sequence, 309 residues long: Cyclin-dependent kinase B1-1 (309 aa).

The 298-residue stretch at 4–301 (YEKLEKVGEG…AKTALDHPYF (298 aa)) folds into the Protein kinase domain. ATP is bound by residues 10 to 18 (VGEGTYGKV) and Lys33. Residue Tyr15 is modified to Phosphotyrosine. The active-site Proton acceptor is Asp142. Phosphothreonine; by CAK is present on Thr176.

The protein belongs to the protein kinase superfamily. CMGC Ser/Thr protein kinase family. CDC2/CDKX subfamily. Interacts with CKS1. Interacts with CYCU3-1. Interacts with SIM, SMR1 and SMR2. In terms of tissue distribution, highly expressed in guard cells and stomatal precursor cells of cotyledons. Expressed in roots, stems, flowers and siliques.

It localises to the nucleus. The enzyme catalyses L-seryl-[protein] + ATP = O-phospho-L-seryl-[protein] + ADP + H(+). The catalysed reaction is L-threonyl-[protein] + ATP = O-phospho-L-threonyl-[protein] + ADP + H(+). It carries out the reaction [DNA-directed RNA polymerase] + ATP = phospho-[DNA-directed RNA polymerase] + ADP + H(+). With respect to regulation, phosphorylation at Thr-14 or Tyr-15 inactivates the enzyme, while phosphorylation at Thr-176 activates it. In terms of biological role, may control G2/M (mitosis) phase progression. Plays a role in regulating seedling growth in darkness via regulation of hypocotyl cell elongation and cotyledon cell development. Plays a role in stomatal development. Required to suppress endoreduplication. Together with CDKB1-2, promotes both the last division in the stomatal cell lineage as well as the number of stomata. In collaboration with MYB124 and MYB88, restrict the G1/S transition and chloroplast and nuclear number during stomatal formation, and normally maintain fate and developmental progression throughout the stomatal cell lineage. The protein is Cyclin-dependent kinase B1-1 (CDKB1-1) of Arabidopsis thaliana (Mouse-ear cress).